Here is a 101-residue protein sequence, read N- to C-terminus: Ribonuclease kappa-B (101 aa).

2 consecutive transmembrane segments (helical) span residues A13 to F33 and V68 to C88.

Belongs to the RNase K family.

It is found in the membrane. Its function is as follows. Endoribonuclease which preferentially cleaves ApU and ApG phosphodiester bonds. This chain is Ribonuclease kappa-B (rnasekb), found in Danio rerio (Zebrafish).